We begin with the raw amino-acid sequence, 272 residues long: MENFEVIKALFLGFVEGLTEFLPISSTGHLILFGHIIDFHSDGGRVFEVVIQLGAILAVCWLYRQKIINLIKGFFSGDVESRHFAISVLIAFFPAVIIGVLAVDFIKSVLFSPIVVAIALIVGALIIFWVESKQFEHKTDDATKITFKQALLVGLAQCVAMIPGTSRSGATIVGGMFAGLSRKAATEFSFFLAMPTMLGAATFDLIKNADVLTSDNMVNIGVGFVAAFIAALLVVKALVLFVERHTLRVFAWYRIVLGVIILIAAMFFNLSA.

A run of 8 helical transmembrane segments spans residues 4 to 24, 43 to 63, 86 to 106, 109 to 129, 145 to 165, 186 to 206, 222 to 242, and 249 to 269; these read FEVIKALFLGFVEGLTEFLPI, GGRVFEVVIQLGAILAVCWLY, ISVLIAFFPAVIIGVLAVDFI, VLFSPIVVAIALIVGALIIFW, ITFKQALLVGLAQCVAMIPGT, TEFSFFLAMPTMLGAATFDLI, VGFVAAFIAALLVVKALVLFV, and VFAWYRIVLGVIILIAAMFFN.

This sequence belongs to the UppP family.

It is found in the cell inner membrane. It catalyses the reaction di-trans,octa-cis-undecaprenyl diphosphate + H2O = di-trans,octa-cis-undecaprenyl phosphate + phosphate + H(+). In terms of biological role, catalyzes the dephosphorylation of undecaprenyl diphosphate (UPP). Confers resistance to bacitracin. The protein is Undecaprenyl-diphosphatase of Acinetobacter baumannii (strain SDF).